A 1007-amino-acid chain; its full sequence is Serine/threonine-protein kinase PRP4 homolog (1007 aa).

Residues 1–10 (MAAAETQSLR) show a composition bias toward polar residues. The interval 1 to 99 (MAAAETQSLR…EGMSPAKRTK (99 aa)) is disordered. A2 bears the N-acetylalanine mark. Phosphoserine occurs at positions 8, 20, 23, and 32. Composition is skewed to basic residues over residues 39–59 (KHSR…KHKH) and 67–81 (KKHK…HKRK). Residues 82-91 (EVIDASDKEG) show a composition bias toward basic and acidic residues. S87 and S93 each carry phosphoserine. K99 is modified (N6-acetyllysine; alternate). A Glycyl lysine isopeptide (Lys-Gly) (interchain with G-Cter in SUMO2); alternate cross-link involves residue K99. Residue K111 forms a Glycyl lysine isopeptide (Lys-Gly) (interchain with G-Cter in SUMO2) linkage. K117 is covalently cross-linked (Glycyl lysine isopeptide (Lys-Gly) (interchain with G-Cter in SUMO2); alternate). Residue K117 forms a Glycyl lysine isopeptide (Lys-Gly) (interchain with G-Cter in SUMO1); alternate linkage. S131 carries the phosphoserine modification. At Y140 the chain carries Phosphotyrosine. 2 disordered regions span residues 140 to 533 (YESG…EEED) and 559 to 583 (SNMS…SPDD). Phosphoserine is present on residues S142, S144, and S166. The span at 157–168 (GNRSSTRSSSTK) shows a compositional bias: low complexity. Glycyl lysine isopeptide (Lys-Gly) (interchain with G-Cter in SUMO2) cross-links involve residues K170 and K177. Composition is skewed to basic residues over residues 179 to 202 (TTKK…KKSK) and 214 to 230 (RSKS…SKRS). Phosphoserine is present on residues S239, S241, S257, S277, S283, S292, and S294. A compositionally biased stretch (basic and acidic residues) spans 247–270 (RSQEKIGKARSPTDDKVKIEDKSK). Positions 302–315 (SKDRRSRSKERKSK) are enriched in basic residues. The span at 316 to 325 (RSETDKEKKP) shows a compositional bias: basic and acidic residues. S328, S354, S356, S366, and S368 each carry phosphoserine. The segment covering 342–367 (PSRRPGRSPKRRSLSPKPRDKSRRSR) has biased composition (basic residues). T385 is modified (phosphothreonine). S387 bears the Phosphoserine mark. 2 stretches are compositionally biased toward basic and acidic residues: residues 395 to 408 (RSLE…ERRR) and 415 to 429 (RPRD…RSKD). A phosphoserine mark is found at S427, S431, and S437. Over residues 438–497 (PTRRRSRSPIRRRSRSPLRRSRSPRRRSRSPRRRDRGRRSRSRLRRRSRSRGGRRRRSRS) the composition is skewed to basic residues. A phosphoserine mark is found at S518, S519, S520, S565, S569, S578, and S580. The segment covering 518-533 (SSSDDNLEDFDVEEED) has biased composition (acidic residues). The span at 562-581 (SVPSEPSSPQSSTRTRSPSP) shows a compositional bias: low complexity. Glycyl lysine isopeptide (Lys-Gly) (interchain with G-Cter in SUMO2) cross-links involve residues K593 and K659. Residues 687-1003 (YNVYGYTGQG…INQALQHAFI (317 aa)) form the Protein kinase domain. ATP contacts are provided by residues 693–701 (TGQGVFSNV) and K717. At K717 the chain carries N6-acetyllysine. Residue D815 is the Proton acceptor of the active site. Phosphotyrosine is present on Y849. S852 bears the Phosphoserine mark.

It belongs to the protein kinase superfamily. CMGC Ser/Thr protein kinase family. Interacts with CLK1 C-terminus. Associates with the U5 snRNP and NCOR1 deacetylase complexes. Identified in the spliceosome C complex. Phosphorylated by CLK1. Autophosphorylated; phosphorylation inhibits interaction with its targets, such as PRPF6 or SMARCA4.

The protein localises to the nucleus. It is found in the chromosome. The protein resides in the centromere. It localises to the kinetochore. The catalysed reaction is L-seryl-[protein] + ATP = O-phospho-L-seryl-[protein] + ADP + H(+). The enzyme catalyses L-threonyl-[protein] + ATP = O-phospho-L-threonyl-[protein] + ADP + H(+). Serine/threonine kinase involved in spliceosomal assembly as well as mitosis and signaling regulation. Connects chromatin mediated regulation of transcription and pre-mRNA splicing. During spliceosomal assembly, interacts with and phosphorylates PRPF6 and PRPF31, components of the U4/U6-U5 tri-small nuclear ribonucleoprotein (snRNP), to facilitate the formation of the spliceosome B complex. Plays a role in regulating transcription and the spindle assembly checkpoint (SAC). Associates with U5 snRNP and NCOR1 deacetylase complexes which may allow a coordination of pre-mRNA splicing with chromatin remodeling events involved in transcriptional regulation. Associates and probably phosphorylates SMARCA4 and NCOR1. Phosphorylates SRSF1. Associates with kinetochores during mitosis and is necessary for recruitment and maintenance of the checkpoint proteins such as MAD1L1 and MAD12L1 at the kinetochores. Phosphorylates and regulates the activity of the transcription factors such as ELK1 and KLF13. Phosphorylates nuclear YAP1 and WWTR1/TAZ which induces nuclear exclusion and regulates Hippo signaling pathway, involved in tissue growth control. This Pongo abelii (Sumatran orangutan) protein is Serine/threonine-protein kinase PRP4 homolog (PRP4K).